The sequence spans 250 residues: Flagellar L-ring protein (250 aa).

The N-terminal stretch at 1–32 (MTRINTNTQKNNNTKFSKLILGVMVSSIVLSG) is a signal peptide. The N-palmitoyl cysteine moiety is linked to residue cysteine 33. Cysteine 33 carries S-diacylglycerol cysteine lipidation.

Belongs to the FlgH family. The basal body constitutes a major portion of the flagellar organelle and consists of four rings (L,P,S, and M) mounted on a central rod.

It localises to the cell outer membrane. The protein localises to the bacterial flagellum basal body. In terms of biological role, assembles around the rod to form the L-ring and probably protects the motor/basal body from shearing forces during rotation. The protein is Flagellar L-ring protein of Hydrogenovibrio crunogenus (strain DSM 25203 / XCL-2) (Thiomicrospira crunogena).